A 138-amino-acid polypeptide reads, in one-letter code: MERCLILVKPDGVERNLIGEVISRFERKGLAIKALKMMRVTREQAEDHYSVHRLKPFFDDLVSYLTSGPIVAMIVEGNNAIASSRMLAGATDGSKAAPGTIRGDFSLDIERNIVHASDSLESYEHEYKIFFNENEIMD.

6 residues coordinate ATP: lysine 9, phenylalanine 57, arginine 85, threonine 91, arginine 102, and asparagine 112. The active-site Pros-phosphohistidine intermediate is histidine 115.

The protein belongs to the NDK family. Requires Mg(2+) as cofactor.

It localises to the cytoplasm. It carries out the reaction a 2'-deoxyribonucleoside 5'-diphosphate + ATP = a 2'-deoxyribonucleoside 5'-triphosphate + ADP. It catalyses the reaction a ribonucleoside 5'-diphosphate + ATP = a ribonucleoside 5'-triphosphate + ADP. In terms of biological role, major role in the synthesis of nucleoside triphosphates other than ATP. The ATP gamma phosphate is transferred to the NDP beta phosphate via a ping-pong mechanism, using a phosphorylated active-site intermediate. This chain is Nucleoside diphosphate kinase, found in Picrophilus torridus (strain ATCC 700027 / DSM 9790 / JCM 10055 / NBRC 100828 / KAW 2/3).